A 370-amino-acid chain; its full sequence is Phosphoserine aminotransferase (370 aa).

Methionine 1 bears the N-acetylmethionine mark. Positions 44 and 45 each coordinate O-phospho-L-serine. The residue at position 51 (lysine 51) is an N6-acetyllysine. Residues glycine 79, cysteine 80, and tryptophan 107 each contribute to the pyridoxal 5'-phosphate site. Lysine 127 bears the N6-acetyllysine mark. Residues threonine 156, aspartate 176, and glutamine 199 each coordinate pyridoxal 5'-phosphate. Lysine 200 carries the post-translational modification N6-(pyridoxal phosphate)lysine. Residues asparagine 241 and threonine 242 each coordinate pyridoxal 5'-phosphate. Lysine 269, lysine 318, and lysine 323 each carry N6-acetyllysine. Residue serine 331 is modified to Phosphoserine. Lysine 333 carries the post-translational modification N6-acetyllysine. Residues histidine 335, arginine 336, and arginine 342 each contribute to the O-phospho-L-serine site.

This sequence belongs to the class-V pyridoxal-phosphate-dependent aminotransferase family. SerC subfamily. As to quaternary structure, homodimer. The cofactor is pyridoxal 5'-phosphate. As to expression, expressed at high levels in the brain, liver, kidney and pancreas, and very weakly expressed in the thymus, prostate, testis and colon.

The catalysed reaction is O-phospho-L-serine + 2-oxoglutarate = 3-phosphooxypyruvate + L-glutamate. Its pathway is amino-acid biosynthesis; L-serine biosynthesis; L-serine from 3-phospho-D-glycerate: step 2/3. With respect to regulation, phosphoserine transaminase activity is strongly stimulated by increasing the ionic strength. Involved in L-serine biosynthesis via the phosphorylated pathway, a three-step pathway converting the glycolytic intermediate 3-phospho-D-glycerate into L-serine. Catalyzes the second step, that is the pyridoxal 5'-phosphate-dependent transamination of 3-phosphohydroxypyruvate and L-glutamate to O-phosphoserine (OPS) and alpha-ketoglutarate. This Homo sapiens (Human) protein is Phosphoserine aminotransferase.